Consider the following 303-residue polypeptide: UDP-N-acetylenolpyruvoylglucosamine reductase (303 aa).

An FAD-binding PCMH-type domain is found at 23–188 (KVGGPADYLV…ISAKFALKPG (166 aa)). Residue Arg167 is part of the active site. The Proton donor role is filled by Ser217. Glu287 is a catalytic residue.

It belongs to the MurB family. Requires FAD as cofactor.

It is found in the cytoplasm. It catalyses the reaction UDP-N-acetyl-alpha-D-muramate + NADP(+) = UDP-N-acetyl-3-O-(1-carboxyvinyl)-alpha-D-glucosamine + NADPH + H(+). The protein operates within cell wall biogenesis; peptidoglycan biosynthesis. In terms of biological role, cell wall formation. This Streptococcus uberis (strain ATCC BAA-854 / 0140J) protein is UDP-N-acetylenolpyruvoylglucosamine reductase.